The primary structure comprises 920 residues: Rho guanine nucleotide exchange factor 1 (920 aa).

Residues 39–230 form the RGSL domain; the sequence is DQNSQFQSLE…SLYMRHLGVR (192 aa). The disordered stretch occupies residues 231–404; sequence TKSGDKKSGR…PGWRELVPPD (174 aa). Residues 281–311 are compositionally biased toward basic and acidic residues; sequence DCRHLKVEADAEKPGPADRKGGLGMSSRDRT. A compositionally biased stretch (acidic residues) spans 364–380; that stretch reads STEDNGETESPEPGDDG. Residues S373, G386, E390, S408, and S412 each carry the phosphoserine modification. The region spanning 415 to 604 is the DH domain; sequence KRQEVISELL…REILHHVNQA (190 aa). 2 positions are modified to phosphothreonine: R432 and T694. A PH domain is found at 646-759; the sequence is KLVHEGPLTW…WCNLITETAG (114 aa). Y737 carries the phosphotyrosine; by JAK2 modification. Disordered regions lie at residues 764–797 and 840–864; these read PAPASRLKPRPSPSSIREPLLSSSENGTGGAEMA and TEEDSGAGPPRDGDGVPGGRAPGPV. Residues 865-894 are a coiled coil; the sequence is HTQEIEENLLSLEVAIRQLEELEEEFCRLR. The residue at position 905 (S905) is a Phosphoserine.

In terms of assembly, interacts with RHOA, GNA12 and GNA13. Homooligomerizes through the coiled coil region. Interacts with CTNNAL1. May interact with CCPG1. Phosphorylated by PKCA. Angiotensin-2 induced Tyr-737 phosphorylation is mediated by JAK2. Isoform 5 is phosphorylated at 'Ser-390'. As to expression, ubiquitously expressed.

The protein localises to the cytoplasm. Its subcellular location is the membrane. Functionally, seems to play a role in the regulation of RhoA GTPase by guanine nucleotide-binding alpha-12 (GNA12) and alpha-13 (GNA13) subunits. Acts as a GTPase-activating protein (GAP) for GNA12 and GNA13, and as guanine nucleotide exchange factor (GEF) for RhoA GTPase. Activated G alpha 13/GNA13 stimulates the RhoGEF activity through interaction with the RGS-like domain. This GEF activity is inhibited by binding to activated GNA12. Mediates angiotensin-2-induced RhoA activation. Isoform 3 and isoform 4 do not homooligomerize and show an enhanced RhoGEF activity. In lymphoid follicles, may trigger activation of GNA13 as part of S1PR2-dependent signaling pathway that leads to inhibition of germinal center (GC) B cell growth and migration outside the GC niche. This is Rho guanine nucleotide exchange factor 1 (Arhgef1) from Mus musculus (Mouse).